The chain runs to 99 residues: Transposase InsE for insertion sequence IS3A (99 aa).

The disordered stretch occupies residues 1-21; that stretch reads MTKTVSTSKKPRKQHSPEFRS.

The protein belongs to the transposase 8 family.

In terms of biological role, involved in the transposition of the insertion sequence IS3. The polypeptide is Transposase InsE for insertion sequence IS3A (insE1) (Escherichia coli (strain K12)).